A 716-amino-acid polypeptide reads, in one-letter code: Polyribonucleotide nucleotidyltransferase (716 aa).

Asp-493 and Asp-499 together coordinate Mg(2+). The KH domain maps to 560-619 (PRMITIKINPEKIRDVIGKGGSVIRALTEETGTTIDISDDGVVTIASTSSEGMAEAKKRI). In terms of domain architecture, S1 motif spans 629-697 (GQVYEGTVLK…EKGRVRLSAK (69 aa)).

This sequence belongs to the polyribonucleotide nucleotidyltransferase family. Mg(2+) is required as a cofactor.

The protein localises to the cytoplasm. It carries out the reaction RNA(n+1) + phosphate = RNA(n) + a ribonucleoside 5'-diphosphate. Its function is as follows. Involved in mRNA degradation. Catalyzes the phosphorolysis of single-stranded polyribonucleotides processively in the 3'- to 5'-direction. The protein is Polyribonucleotide nucleotidyltransferase of Paraburkholderia xenovorans (strain LB400).